The primary structure comprises 476 residues: Eukaryotic translation initiation factor 3 subunit L (476 aa).

Residues 257-452 form the PCI domain; sequence DAIRMFSHIL…DLDYALENDL (196 aa).

The protein belongs to the eIF-3 subunit L family. Component of the eukaryotic translation initiation factor 3 (eIF-3) complex.

It localises to the cytoplasm. Its function is as follows. Component of the eukaryotic translation initiation factor 3 (eIF-3) complex, which is involved in protein synthesis of a specialized repertoire of mRNAs and, together with other initiation factors, stimulates binding of mRNA and methionyl-tRNAi to the 40S ribosome. The eIF-3 complex specifically targets and initiates translation of a subset of mRNAs involved in cell proliferation. This Aspergillus niger (strain ATCC MYA-4892 / CBS 513.88 / FGSC A1513) protein is Eukaryotic translation initiation factor 3 subunit L.